Consider the following 1757-residue polypeptide: 1-phosphatidylinositol-3-phosphate 5-kinase FAB1A (1757 aa).

Residues Asp36–Glu102 form an FYVE-type zinc finger. Residues Cys42, Cys45, Cys58, Cys61, Cys66, Cys69, Cys94, and Cys97 each contribute to the Zn(2+) site. Disordered regions lie at residues Ala125–Gln193, Lys276–Ser297, Leu313–Pro346, and Ala684–Ser709. Residues Asn134–Gly145 show a composition bias toward polar residues. The segment covering Pro317–Asp337 has biased composition (acidic residues). A coiled-coil region spans residues Leu1014–Asp1087. Residues Ser1395–Phe1719 form the PIPK domain. Over residues Ala1729–Ala1739 the composition is skewed to low complexity. Residues Ala1729–Ser1757 form a disordered region.

In terms of assembly, component of the PI(3,5)P2 regulatory complex at least composed of ATG18, SAC/FIG4, FAB1 and VAC14. Requires Mg(2+) as cofactor. The cofactor is Mn(2+). In terms of tissue distribution, ubiquitous with highest expression levels in pollen, seed, and senescent leaves.

The protein resides in the endosome membrane. The catalysed reaction is a 1,2-diacyl-sn-glycero-3-phospho-(1D-myo-inositol-3-phosphate) + ATP = a 1,2-diacyl-sn-glycero-3-phospho-(1D-myo-inositol-3,5-bisphosphate) + ADP + H(+). In terms of biological role, the PI(3,5)P2 regulatory complex regulates both the synthesis and turnover of phosphatidylinositol 3,5-bisphosphate (PtdIns(3,5)P2). Catalyzes the phosphorylation of phosphatidylinositol 3-phosphate on the fifth hydroxyl of the myo-inositol ring, to form phosphatidylinositol 3,5-bisphosphate. Plays an important role in maintenance of endomembrane homeostasis including endocytosis, vacuole formation, and vacuolar acidification processes. Required for development of viable pollen. Might mediate recycling of auxin transporters. This Arabidopsis thaliana (Mouse-ear cress) protein is 1-phosphatidylinositol-3-phosphate 5-kinase FAB1A (FAB1A).